The following is a 1187-amino-acid chain: ATP-dependent DNA helicase MPH1 (1187 aa).

Residues Ile144 to Lys311 enclose the Helicase ATP-binding domain. Residue Leu157–Thr164 participates in ATP binding. The DEAH box motif lies at Asp259–His262. A Helicase C-terminal domain is found at Glu486–Met681. 3 disordered regions span residues Val542–Met576, Asp781–Val848, and Pro941–Lys1003. Positions Lys547–Lys556 are enriched in basic residues. Over residues Thr564–Met576 the composition is skewed to polar residues. Over residues Asp781 to Thr817 the composition is skewed to basic and acidic residues. Polar residues predominate over residues Thr822–Val848. Positions Ser967–Thr977 are enriched in low complexity. Residues Ser980–Val989 show a composition bias toward basic and acidic residues.

Belongs to the DEAD box helicase family. DEAH subfamily. FANCM sub-subfamily. As to quaternary structure, interacts with the MHF histone-fold complex to form the FANCM-MHF complex.

It is found in the nucleus. It catalyses the reaction ATP + H2O = ADP + phosphate + H(+). In terms of biological role, ATP-dependent DNA helicase involved in DNA damage repair by homologous recombination and in genome maintenance. Capable of unwinding D-loops. Plays a role in limiting crossover recombinants during mitotic DNA double-strand break (DSB) repair. Component of a FANCM-MHF complex which promotes gene conversion at blocked replication forks, probably by reversal of the stalled fork. In Candida albicans (strain SC5314 / ATCC MYA-2876) (Yeast), this protein is ATP-dependent DNA helicase MPH1.